Here is a 64-residue protein sequence, read N- to C-terminus: Small ribosomal subunit protein bS21 (64 aa).

The tract at residues 40 to 64 (PPSVKRKIKSQEAQRRMRRTKRKRF) is disordered. The span at 55–64 (RMRRTKRKRF) shows a compositional bias: basic residues.

Belongs to the bacterial ribosomal protein bS21 family.

The sequence is that of Small ribosomal subunit protein bS21 from Elusimicrobium minutum (strain Pei191).